The primary structure comprises 445 residues: NAD-specific glutamate dehydrogenase (445 aa).

The active site involves Lys124. 235–241 contributes to the NAD(+) binding site; that stretch reads GFGNVAW.

It belongs to the Glu/Leu/Phe/Val dehydrogenases family. In terms of assembly, homohexamer.

It catalyses the reaction L-glutamate + NAD(+) + H2O = 2-oxoglutarate + NH4(+) + NADH + H(+). The polypeptide is NAD-specific glutamate dehydrogenase (gdhB) (Bacteroides fragilis (strain YCH46)).